We begin with the raw amino-acid sequence, 584 residues long: Protein phosphatase 2A scaffold subunit (584 aa).

HEAT repeat units follow at residues 7 to 45, 46 to 84, 86 to 123, 168 to 206, 207 to 239, 240 to 278, 279 to 317, 318 to 356, 358 to 395, 397 to 434, 441 to 479, 480 to 512, 513 to 551, and 553 to 584; these read ESDD…ALGP, ERTR…FVGG, EHAV…EIPT, LRKT…VKSE, ILPL…MLTN, EENI…SMGT, EITK…LLTK, EMNI…IYGK, DTLT…VIGI, MLSQ…QLGV, LGNL…AKNN, IIPK…VVGG, DVIS…LLDS, and IVQS…LQLC.

This sequence belongs to the phosphatase 2A regulatory subunit A family. As to quaternary structure, component of the Sca1 complex composed of at least gefA, gefH, scaA, phr, and the protein phosphatase 2A subunits pppA and pho2B.

Its subcellular location is the cytoplasm. It is found in the cytosol. The protein localises to the cell membrane. Its function is as follows. Scaffolding molecule which may coordinate the assembly of the catalytic subunit and a variable regulatory B subunit. Component of the Sca1 complex, a regulator of cell motility, chemotaxis and signal relay. The Sca1 complex is recruited to the plasma membrane in a chemoattractant- and F-actin-dependent manner and is enriched at the leading edge of chemotaxing cells where it regulates F-actin dynamics and signal relay by controlling the activation of rasC and the downstream target of rapamycin complex 2 (TORC2)-Akt/protein kinase B (PKB) pathway. This chain is Protein phosphatase 2A scaffold subunit (pppA), found in Dictyostelium discoideum (Social amoeba).